The primary structure comprises 92 residues: Integration host factor subunit beta (92 aa).

Belongs to the bacterial histone-like protein family. In terms of assembly, heterodimer of an alpha and a beta chain.

Functionally, this protein is one of the two subunits of integration host factor, a specific DNA-binding protein that functions in genetic recombination as well as in transcriptional and translational control. The chain is Integration host factor subunit beta from Azotobacter vinelandii (strain DJ / ATCC BAA-1303).